The sequence spans 403 residues: MDKTSINKVVLAYSGGLDTSIIVKWLQDTYQCEVVTFTADIGQGEEVEPARVKAEAAGVKEIYIEDLREEFARNFVFPMFRANAIYEGEYLLGTSIARPLISKRLVEIAKQVGADAISHGATGKGNDQVRFELNAYALNADIQVIAPWREWDLSSRESLMDYAQKHGIEIDYKKQSKKSPYSMDANLLHISYEGNILEDPWTEPEEDMWRWTLSPENAPDKVEYVEMTFKKGDIIAINGKVMSPASVMEDLNKRAGAHGIGRDDIVENRFVGMKSRGCYETPSGTVMLKARRAMESLTLDRAAAHLKDELMPKYAEMVYNGFWFAPEREMLQAAIDKTQETVSGVVRLKFYKGNVTVVGRQSKNSLFSEKIVTFENDDGIYNQRDAAGFIKLNALRLCLNTIK.

ATP is bound by residues 12–20 (AYSGGLDTS) and A39. 2 residues coordinate L-citrulline: Y90 and S95. Position 120 (G120) interacts with ATP. Residues T122, N126, and D127 each contribute to the L-aspartate site. L-citrulline is bound at residue N126. L-citrulline contacts are provided by R130, S182, S191, E267, and Y279.

This sequence belongs to the argininosuccinate synthase family. Type 1 subfamily. As to quaternary structure, homotetramer.

The protein resides in the cytoplasm. The enzyme catalyses L-citrulline + L-aspartate + ATP = 2-(N(omega)-L-arginino)succinate + AMP + diphosphate + H(+). The protein operates within amino-acid biosynthesis; L-arginine biosynthesis; L-arginine from L-ornithine and carbamoyl phosphate: step 2/3. This Vesicomyosocius okutanii subsp. Calyptogena okutanii (strain HA) protein is Argininosuccinate synthase.